We begin with the raw amino-acid sequence, 79 residues long: Small ribosomal subunit protein bS18B (79 aa).

The protein belongs to the bacterial ribosomal protein bS18 family. Part of the 30S ribosomal subunit. Forms a tight heterodimer with protein bS6.

Functionally, binds as a heterodimer with protein bS6 to the central domain of the 16S rRNA, where it helps stabilize the platform of the 30S subunit. The protein is Small ribosomal subunit protein bS18B of Saccharopolyspora erythraea (strain ATCC 11635 / DSM 40517 / JCM 4748 / NBRC 13426 / NCIMB 8594 / NRRL 2338).